A 39-amino-acid chain; its full sequence is Cytochrome b559 subunit beta (39 aa).

Residues 14-30 (WLAVHGLAIPTVSFLGS) form a helical membrane-spanning segment. Residue His18 participates in heme binding.

This sequence belongs to the PsbE/PsbF family. As to quaternary structure, heterodimer of an alpha subunit and a beta subunit. PSII is composed of 1 copy each of membrane proteins PsbA, PsbB, PsbC, PsbD, PsbE, PsbF, PsbH, PsbI, PsbJ, PsbK, PsbL, PsbM, PsbT, PsbX, PsbY, PsbZ, Psb30/Ycf12, at least 3 peripheral proteins of the oxygen-evolving complex and a large number of cofactors. It forms dimeric complexes. Heme b serves as cofactor.

The protein resides in the plastid. It localises to the chloroplast thylakoid membrane. This b-type cytochrome is tightly associated with the reaction center of photosystem II (PSII). PSII is a light-driven water:plastoquinone oxidoreductase that uses light energy to abstract electrons from H(2)O, generating O(2) and a proton gradient subsequently used for ATP formation. It consists of a core antenna complex that captures photons, and an electron transfer chain that converts photonic excitation into a charge separation. The chain is Cytochrome b559 subunit beta from Beta vulgaris (Sugar beet).